The chain runs to 1135 residues: Exportin-6-A (1135 aa).

The 67-residue stretch at 31–97 folds into the Importin N-terminal domain; sequence IESLLNNFAQ…RNSLPKLLLS (67 aa).

The protein belongs to the exportin family. Expressed during meiotic maturation 2 hours after germinal vesicle break down (GVBD) and in unfertilized and fertilized eggs, but not in oocytes (at protein level). Expressed in somatic cells, in oocytes, during meiotic maturation and in unfertilized and fertilized eggs.

It is found in the nucleus. The protein resides in the cytoplasm. Its function is as follows. Mediates the nuclear export of actin and profilin-actin complexes in somatic cells. Oocyte nuclei lack active actin export. The sequence is that of Exportin-6-A (xpo6-a) from Xenopus laevis (African clawed frog).